The sequence spans 498 residues: Polyamine aminopropyltransferase (498 aa).

6 consecutive transmembrane segments (helical) span residues 7-27 (ISVL…GTIA), 35-55 (VTQF…GSWL), 67-87 (FLEI…ILYL), 97-117 (IPLF…IPVL), 134-154 (VLSL…IFFA), and 163-183 (GFIF…VLPL). The segment at 196–446 (VVVLTLLILG…AGQRPIQFKK (251 aa)) is spermidine synthase. Residues 200-439 (TLLILGFSYS…GEWGFVLAGQ (240 aa)) enclose the PABS domain. An S-methyl-5'-thioadenosine-binding site is contributed by glutamine 234. Spermidine-binding residues include histidine 264 and aspartate 288. S-methyl-5'-thioadenosine is bound by residues aspartate 308 and 342–343 (DA). Aspartate 360 acts as the Proton acceptor in catalysis.

This sequence belongs to the spermidine/spermine synthase family. In terms of assembly, homodimer or homotetramer.

Its subcellular location is the cell membrane. It carries out the reaction S-adenosyl 3-(methylsulfanyl)propylamine + putrescine = S-methyl-5'-thioadenosine + spermidine + H(+). Its pathway is amine and polyamine biosynthesis; spermidine biosynthesis; spermidine from putrescine: step 1/1. Functionally, catalyzes the irreversible transfer of a propylamine group from the amino donor S-adenosylmethioninamine (decarboxy-AdoMet) to putrescine (1,4-diaminobutane) to yield spermidine. This is Polyamine aminopropyltransferase from Leptospira interrogans serogroup Icterohaemorrhagiae serovar copenhageni (strain Fiocruz L1-130).